A 956-amino-acid chain; its full sequence is Plasma membrane ATPase 3 (956 aa).

At 1 to 65 (MGEKPEVLDA…EKKESKFSKF (65 aa)) the chain is on the cytoplasmic side. A helical membrane pass occupies residues 66–85 (LGFMWNPLSWVMEAAAIMAI). Residues 86-97 (ALANGGGKPPDW) lie on the Extracellular side of the membrane. A helical membrane pass occupies residues 98 to 118 (QDFVGIITLLIINSTISFIEE). Residues 119–247 (NNAGNAAAAL…GHFQKVLTAI (129 aa)) lie on the Cytoplasmic side of the membrane. The chain crosses the membrane as a helical span at residues 248-268 (GNFCICSIAVGMIIEIIVMYP). The Extracellular segment spans residues 269-278 (IQHRKYRPGI). Residues 279–300 (DNLLVLLIGGIPIAMPTVLSVT) form a helical membrane-spanning segment. The Cytoplasmic segment spans residues 301–647 (MAIGSHRLAQ…TSRAIFQRMK (347 aa)). Catalysis depends on aspartate 333, which acts as the 4-aspartylphosphate intermediate. Mg(2+)-binding residues include aspartate 592 and aspartate 596. The chain crosses the membrane as a helical span at residues 648–669 (NYTIYAVSITIRIVLGFMLLAL). The Extracellular segment spans residues 670–674 (IWQFD). The chain crosses the membrane as a helical span at residues 675 to 697 (FPPFMVLIIAILNDGTIMTISKD). Over 698-713 (RVKPSPLPDSWKLAEI) the chain is Cytoplasmic. The helical transmembrane segment at 714-734 (FTTGVVLGGYLAMMTVIFFWA) threads the bilayer. The Extracellular portion of the chain corresponds to 735–759 (AYKTNFFPRVFGVSTLEKTATDDFR). The chain crosses the membrane as a helical span at residues 760–780 (KLASAIYLQVSTISQALIFVT). The Cytoplasmic portion of the chain corresponds to 781–792 (RSRSWSFMERPG). The helical transmembrane segment at 793–813 (LLLVVAFFIAQLVATLIAVYA) threads the bilayer. At 814–822 (NWSFAAIEG) the chain is on the extracellular side. A helical membrane pass occupies residues 823 to 843 (IGWGWAGVIWLYNIVFYIPLD). Over 844-956 (LXXFLIRYAL…IETIQQAYTV (113 aa)) the chain is Cytoplasmic.

The protein belongs to the cation transport ATPase (P-type) (TC 3.A.3) family. Type IIIA subfamily. As to expression, expressed in roots, stems, leaves from both vegetative and flowering plants, and flowers at early and late stages of development with highest expression levels found in flowers and root tissue.

Its subcellular location is the cell membrane. The catalysed reaction is ATP + H2O + H(+)(in) = ADP + phosphate + 2 H(+)(out). In terms of biological role, the plasma membrane ATPase of plants and fungi is a hydrogen ion pump. The proton gradient it generates drives the active transport of nutrients by H(+)-symport. The resulting external acidification and/or internal alkinization may mediate growth responses. The polypeptide is Plasma membrane ATPase 3 (PMA3) (Nicotiana plumbaginifolia (Leadwort-leaved tobacco)).